A 363-amino-acid chain; its full sequence is NAD(P)H-quinone oxidoreductase subunit 1, chloroplastic (363 aa).

Transmembrane regions (helical) follow at residues 30–50 (LVPI…IVWL), 98–118 (FSIG…VIPF), 129–149 (IGIF…LMSG), 248–268 (YSGI…LLSS), 300–320 (IIGT…FLFI), and 343–363 (FLLP…LLSL).

The protein belongs to the complex I subunit 1 family. NDH is composed of at least 16 different subunits, 5 of which are encoded in the nucleus.

It localises to the plastid. It is found in the chloroplast thylakoid membrane. It catalyses the reaction a plastoquinone + NADH + (n+1) H(+)(in) = a plastoquinol + NAD(+) + n H(+)(out). The catalysed reaction is a plastoquinone + NADPH + (n+1) H(+)(in) = a plastoquinol + NADP(+) + n H(+)(out). In terms of biological role, NDH shuttles electrons from NAD(P)H:plastoquinone, via FMN and iron-sulfur (Fe-S) centers, to quinones in the photosynthetic chain and possibly in a chloroplast respiratory chain. The immediate electron acceptor for the enzyme in this species is believed to be plastoquinone. Couples the redox reaction to proton translocation, and thus conserves the redox energy in a proton gradient. The polypeptide is NAD(P)H-quinone oxidoreductase subunit 1, chloroplastic (Gossypium barbadense (Sea Island cotton)).